The following is a 260-amino-acid chain: Snake venom serine protease 2B (260 aa).

A signal peptide spans M1 to A18. The propeptide occupies Q19–L24. One can recognise a Peptidase S1 domain in the interval V25–A251. 6 disulfide bridges follow: C31–C165, C52–C68, C102–C258, C144–C212, C176–C191, and C202–C227. Catalysis depends on H67, which acts as the Charge relay system. Residues N101 and N105 are each glycosylated (N-linked (GlcNAc...) asparagine). D112 acts as the Charge relay system in catalysis. N-linked (GlcNAc...) asparagine glycosylation is found at N123 and N156. Catalysis depends on S206, which acts as the Charge relay system.

Belongs to the peptidase S1 family. Snake venom subfamily. In terms of assembly, monomer. Expressed by the venom gland.

The protein resides in the secreted. In terms of biological role, snake venom serine protease that may act in the hemostasis system of the prey. The polypeptide is Snake venom serine protease 2B (TLG2B) (Craspedocephalus gramineus (Bamboo pit viper)).